Consider the following 1706-residue polypeptide: DDT domain-containing protein PTM (1706 aa).

A compositionally biased stretch (basic residues) spans 1–16; the sequence is MEAKVPRPRGRPRKRQ. Disordered regions lie at residues 1 to 27 and 144 to 168; these read MEAK…KLNN and VTNS…RGSD. The short motif at 9–18 is the Nuclear localization signal element; that stretch reads RGRPRKRQRL. The span at 148 to 160 shows a compositional bias: acidic residues; it reads EDGDSYSDSESSE. One can recognise a DDT domain in the interval 192 to 252; sequence EEAVAHLLSV…LRALKGHLER (61 aa). A compositionally biased stretch (basic and acidic residues) spans 375–393; that stretch reads YKEKEVTDSSTNESKDLDS. Residues 375–408 are disordered; sequence YKEKEVTDSSTNESKDLDSRCTNGGSNEVSSDLD. The span at 394-408 shows a compositional bias: polar residues; it reads RCTNGGSNEVSSDLD. A PHD-type 1 zinc finger spans residues 411-458; the sequence is SDECRICGMDGTLLCCDGCPLAYHSRCIGVVKMYIPDGPWFCPECTIN. Disordered regions lie at residues 1165 to 1194 and 1311 to 1345; these read KPPS…SVSK and TNQK…PATP. Polar residues-rich tracts occupy residues 1167 to 1194 and 1311 to 1323; these read PSQQ…SVSK and TNQK…SGLD. Over residues 1325–1336 the composition is skewed to basic and acidic residues; the sequence is DSERMSEQKDSK. 5 consecutive transmembrane segments (helical) span residues 1539–1559, 1569–1589, 1596–1616, 1624–1644, and 1682–1702; these read ALGS…SILP, LAGP…GLFL, ANDL…LGLI, AALH…WCGL, and MLGL…YVLI.

In terms of assembly, interacts (via the DDT domain) with CHR11 (via C-terminus).

The protein resides in the plastid. Its subcellular location is the chloroplast outer membrane. It localises to the nucleus. In terms of biological role, membrane-bound transcription factor required for the plastid-to-nucleus retrograde signaling. Functions in multiple retrograde pathways. The plastid-to-nucleus signal plays an important role in the coordinated expression of both nuclear- and chloroplast-localized genes that encode photosynthesis-related proteins. In the nucleus, activates ABI4 transcription in a PHD-dependent manner associated with histone modifications. Localized primarily in the chloroplast outer membrane as dormant form and, in response to retrograde signals, is released from the membrane through proteolytic cleavage and its cleaved fragment containing the transcription factor domain is redistributed to the nucleus, where it regulates the expression of particular nuclear genes. The protein is DDT domain-containing protein PTM of Arabidopsis thaliana (Mouse-ear cress).